The primary structure comprises 393 residues: Glycocyamine kinase (393 aa).

Residues 7–94 (REKFAKENFP…FDRVIEEIHH (88 aa)) form the Phosphagen kinase N-terminal domain. Residues 120-362 (YVKSCRIRCG…NVLIEADKRL (243 aa)) enclose the Phosphagen kinase C-terminal domain. ATP is bound by residues 123-127 (SCRIR), histidine 186, arginine 231, 287-291 (RASVH), 315-320 (RGTGGE), and aspartate 330. Positions 367–393 (PIDDLTPRLNSSTGTSISATASRHMTL) are disordered. A compositionally biased stretch (low complexity) spans 377–393 (SSTGTSISATASRHMTL).

Belongs to the ATP:guanido phosphotransferase family. Monomer.

The catalysed reaction is guanidinoacetate + ATP = phosphoguanidinoacetate + ADP + H(+). This chain is Glycocyamine kinase, found in Hediste diversicolor (Sandworm).